A 1413-amino-acid chain; its full sequence is Sushi, nidogen and EGF-like domain-containing protein 1 (1413 aa).

The N-terminal stretch at 1–24 is a signal peptide; it reads MRHGVAWALLVAAALGLGARGVRG. The NIDO domain maps to 103 to 258; that stretch reads AFWADVDNRR…GRWAFRIDDA (156 aa). Asn145 and Asn204 each carry an N-linked (GlcNAc...) asparagine glycan. EGF-like domains are found at residues 268–309, 311–347, and 349–385; these read TTSV…RRCH, DVNE…PTCE, and AQSP…AACE. Disulfide bonds link Cys272–Cys284, Cys278–Cys297, Cys299–Cys308, Cys315–Cys326, Cys320–Cys335, Cys337–Cys346, Cys353–Cys364, Cys358–Cys373, Cys375–Cys384, Cys391–Cys402, Cys396–Cys411, Cys413–Cys422, Cys433–Cys444, Cys438–Cys453, Cys455–Cys464, Cys472–Cys480, Cys474–Cys488, and Cys490–Cys499. An N-linked (GlcNAc...) asparagine glycan is attached at Asn292. Positions 352–374 constitute a Follistatin-like 1 domain; sequence PCDTKECQHGGQCQVENGSAVCV. The N-linked (GlcNAc...) asparagine glycan is linked to Asn368. The 37-residue stretch at 387–423 folds into the EGF-like 4; calcium-binding domain; that stretch reads DVDDCSPDPCLNGGSCVDLVGNYTCLCAEPFKGLRCE. Residue Asn408 is glycosylated (N-linked (GlcNAc...) asparagine). EGF-like domains follow at residues 429–465 and 468–500; these read VPDA…LDCR and VPDD…LLCE. An N-linked (GlcNAc...) asparagine glycan is attached at Asn484. Positions 507–530 constitute a Follistatin-like 2 domain; the sequence is PCNMNTQCPDGGYCMEHGGSYLCV. A glycan (N-linked (GlcNAc...) asparagine) is linked at Asn536. EGF-like domains lie at 541–577, 580–616, 619–655, and 657–693; these read LPSP…KHCE, RPHL…RHCE, KPDS…RHCE, and APSP…RRCQ. 26 cysteine pairs are disulfide-bonded: Cys545-Cys556, Cys550-Cys565, Cys567-Cys576, Cys584-Cys595, Cys589-Cys604, Cys606-Cys615, Cys623-Cys634, Cys628-Cys643, Cys645-Cys654, Cys661-Cys672, Cys666-Cys681, Cys683-Cys692, Cys698-Cys739, Cys724-Cys751, Cys757-Cys768, Cys762-Cys777, Cys779-Cys788, Cys795-Cys806, Cys800-Cys815, Cys817-Cys826, Cys833-Cys844, Cys838-Cys853, Cys855-Cys864, Cys871-Cys882, Cys876-Cys891, and Cys893-Cys902. One can recognise a Sushi domain in the interval 696-753; it reads VDCGPPEEVKHATLRFNGTRLGAVALYACDRGYSLSAPSRIRVCQPHGVWSEPPQCLE. An N-linked (GlcNAc...) asparagine glycan is attached at Asn712. Residues 753–789 form the EGF-like 11; calcium-binding domain; sequence EIDECRSQPCLHGGSCQDRVAGYLCLCSTGYEGAHCE. The region spanning 791-827 is the EGF-like 12; calcium-binding domain; that stretch reads ERDECRAHPCRNGGSCRNLPGAYVCRCPAGFVGVHCE. EGF-like domains are found at residues 829–865 and 867–903; these read EVDA…YHCE and VSDP…EDCA. N-linked (GlcNAc...) asparagine glycosylation occurs at Asn886. 3 Fibronectin type-III domains span residues 908-1006, 1007-1105, and 1106-1200; these read PPTA…TRPR, PVEG…TRPL, and PPAN…SPRD. N-linked (GlcNAc...) asparagine glycans are attached at residues Asn977, Asn1015, Asn1109, and Asn1139. The interval 1206-1226 is disordered; the sequence is WHQGGHHPRVLKNRPPPARLP. Basic residues predominate over residues 1207 to 1217; it reads HQGGHHPRVLK. The region spanning 1307-1343 is the EGF-like 15 domain; that stretch reads VPGNCSENPCQNGGTCVPGADAHSCDCGPGFKGRRCE. N-linked (GlcNAc...) asparagine glycosylation occurs at Asn1310. Cystine bridges form between Cys1311/Cys1322, Cys1316/Cys1331, and Cys1333/Cys1342. The segment at 1394 to 1413 is disordered; it reads TSLKKTPNRKQSKSQTLEKS.

In terms of processing, phosphorylated on serine and threonine residues. Post-translationally, N-glycosylated.

The protein resides in the secreted. It is found in the extracellular space. The protein localises to the extracellular matrix. This Homo sapiens (Human) protein is Sushi, nidogen and EGF-like domain-containing protein 1.